A 125-amino-acid polypeptide reads, in one-letter code: DNA-directed RNA polymerase II subunit RPB9 (125 aa).

An N-acetylmethionine modification is found at methionine 1. Positions 17, 20, 39, 42, 86, 89, 114, and 119 each coordinate Zn(2+). The segment at 17–42 (CQECNNMLYPKEDKENRILLYACRNC) adopts a C4-type zinc-finger fold. A TFIIS-type zinc finger spans residues 82 to 124 (EDHPCQKCGHKEAVFFQSHSARAEDAMRLYYVCTAPHCGHRWT).

It belongs to the archaeal RpoM/eukaryotic RPA12/RPB9/RPC11 RNA polymerase family. Component of the RNA polymerase II (Pol II) core complex consisting of 12 subunits: a ten-subunit catalytic core composed of POLR2A/RPB1, POLR2B/RPB2, POLR2C/RPB3, POLR2I/RPB9, POLR2J/RPB11, POLR2E/RPABC1, POLR2F/RPABC2, POLR2H/RPABC3, POLR2K/RPABC4 and POLR2L/RPABC5 and a mobile stalk composed of two subunits POLR2D/RPB4 and POLR2G/RPB7, protruding from the core and functioning primarily in transcription initiation. Part of Pol II(G) complex, in which Pol II core associates with an additional subunit POLR2M; unlike conventional Pol II, Pol II(G) functions as a transcriptional repressor. Part of TBP-based Pol II pre-initiation complex (PIC), in which Pol II core assembles with general transcription factors and other specific initiation factors including GTF2E1, GTF2E2, GTF2F1, GTF2F2, TCEA1, ERCC2, ERCC3, GTF2H2, GTF2H3, GTF2H4, GTF2H5, GTF2A1, GTF2A2, GTF2B and TBP; this large multi-subunit PIC complex mediates DNA unwinding and targets Pol II core to the transcription start site where the first phosphodiester bond forms.

The protein resides in the nucleus. Its subcellular location is the nucleolus. Functionally, DNA-dependent RNA polymerase catalyzes the transcription of DNA into RNA using the four ribonucleoside triphosphates as substrates. Component of RNA polymerase II which synthesizes mRNA precursors and many functional non-coding RNAs. Pol II is the central component of the basal RNA polymerase II transcription machinery. It is composed of mobile elements that move relative to each other. POLR2I/RPB9 is part of the upper jaw surrounding the central large cleft and thought to grab the incoming DNA template. The polypeptide is DNA-directed RNA polymerase II subunit RPB9 (POLR2I) (Bos taurus (Bovine)).